The primary structure comprises 139 residues: Large ribosomal subunit protein uL22 (139 aa).

Residues 118 to 139 (VEVESRPKKVASKSKSQKGSAR) form a disordered region. Residues 125-139 (KKVASKSKSQKGSAR) show a composition bias toward basic residues.

This sequence belongs to the universal ribosomal protein uL22 family. In terms of assembly, part of the 50S ribosomal subunit.

This protein binds specifically to 23S rRNA; its binding is stimulated by other ribosomal proteins, e.g. L4, L17, and L20. It is important during the early stages of 50S assembly. It makes multiple contacts with different domains of the 23S rRNA in the assembled 50S subunit and ribosome. Its function is as follows. The globular domain of the protein is located near the polypeptide exit tunnel on the outside of the subunit, while an extended beta-hairpin is found that lines the wall of the exit tunnel in the center of the 70S ribosome. This chain is Large ribosomal subunit protein uL22, found in Saccharopolyspora erythraea (strain ATCC 11635 / DSM 40517 / JCM 4748 / NBRC 13426 / NCIMB 8594 / NRRL 2338).